Consider the following 458-residue polypeptide: MNRGVPFRHLLLVLQLALLPAATQGKKVVLGKKGDTVELTCTASQKKSIQFHWKNSNQIKILGNQGSFLTKGPSKLNDRADSRRSLWDQGNFPLIIKNLKIEDSDTYICEVEDQKEEVQLLVFGLTANSDTHLLQGQSLTLTLESPPGSSPSVQCRSPRGKNIQGGKTLSVSQLELQDSGTWTCTVLQNQKKVEFKIDIVVLAFQKASSIVYKKEGEQVEFSFPLAFTVEKLTGSGELWWQAERASSSKSWITFDLKNKEVSVKRVTQDPKLQMGKKLPLHLTLPQALPQYAGSGNLTLALEAKTGKLHQEVNLVVMRATQLQKNLTCEVWGPTSPKLMLSLKLENKEAKVSKREKAVWVLNPEAGMWQCLLSDSGQVLLESNIKVLPTWSTPVQPMALIVLGGVAGLLLFIGLGIFFCVRCRHRRRQAERMSQIKRLLSEKKTCQCPHRFQKTCSPI.

The signal sequence occupies residues 1–25; the sequence is MNRGVPFRHLLLVLQLALLPAATQG. Residues 26–125 form the Ig-like V-type domain; the sequence is KKVVLGKKGD…EEVQLLVFGL (100 aa). Residues 26–396 are Extracellular-facing; that stretch reads KKVVLGKKGD…LPTWSTPVQP (371 aa). 2 cysteine pairs are disulfide-bonded: Cys-41-Cys-109 and Cys-155-Cys-184. 3 Ig-like C2-type domains span residues 126-203, 204-317, and 318-374; these read TANS…VVLA, FQKA…LVVM, and RATQ…LLSD. 2 N-linked (GlcNAc...) asparagine glycosylation sites follow: Asn-296 and Asn-325. A disulfide bond links Cys-328 and Cys-370. The helical transmembrane segment at 397–418 threads the bilayer; the sequence is MALIVLGGVAGLLLFIGLGIFF. S-palmitoyl cysteine attachment occurs at residues Cys-419 and Cys-422. Residues 419-458 are Cytoplasmic-facing; sequence CVRCRHRRRQAERMSQIKRLLSEKKTCQCPHRFQKTCSPI. Residues 427 to 455 are HIV-1 Vpu-susceptibility domain; the sequence is RQAERMSQIKRLLSEKKTCQCPHRFQKTC. Phosphoserine occurs at positions 433, 440, and 456.

Forms disulfide-linked homodimers at the cell surface. Interacts with LCK. Interacts with PTK2/FAK1. Binds to P4HB/PDI. Interacts with IL16; this interaction induces a CD4-dependent signaling in lymphocytes. Interacts (via Ig-like V-type domain) with MHCII alpha chain (via alpha-2 domain) and beta chain (via beta-2 domain); this interaction increases the affinity of TCR for peptide-MHCII. CD4 oligomerization via Ig-like C2-type 2 and 3 domains appears to be required for stable binding to MHCII and adhesion between T cells and APCs. Interacts with Aedes aegypti long form salivary protein D7L2. Interacts with Aedes aegypti neutrophil-stimulating factor 1. Interacts with Aedes aegypti venom allergen-1. In terms of assembly, (Microbial infection) Interacts with HIV-1 Envelope polyprotein gp160 and protein Vpu. As to quaternary structure, (Microbial infection) Interacts with Human Herpes virus 7 surface proteins. Palmitoylation and association with LCK contribute to the enrichment of CD4 in lipid rafts. In terms of processing, phosphorylated by PKC; phosphorylation at Ser-433 plays an important role for CD4 internalization. Highly expressed in T-helper cells. The presence of CD4 is a hallmark of T-helper cells which are specialized in the activation and growth of cytotoxic T-cells, regulation of B cells, or activation of phagocytes. CD4 is also present in other immune cells such as macrophages, dendritic cells or NK cells.

It is found in the cell membrane. Integral membrane glycoprotein that plays an essential role in the immune response and serves multiple functions in responses against both external and internal offenses. In T-cells, functions primarily as a coreceptor for MHC class II molecule:peptide complex. The antigens presented by class II peptides are derived from extracellular proteins while class I peptides are derived from cytosolic proteins. Interacts simultaneously with the T-cell receptor (TCR) and the MHC class II presented by antigen presenting cells (APCs). In turn, recruits the Src kinase LCK to the vicinity of the TCR-CD3 complex. LCK then initiates different intracellular signaling pathways by phosphorylating various substrates ultimately leading to lymphokine production, motility, adhesion and activation of T-helper cells. In other cells such as macrophages or NK cells, plays a role in differentiation/activation, cytokine expression and cell migration in a TCR/LCK-independent pathway. Participates in the development of T-helper cells in the thymus and triggers the differentiation of monocytes into functional mature macrophages. Functionally, (Microbial infection) Primary receptor for human immunodeficiency virus-1 (HIV-1). Down-regulated by HIV-1 Vpu. Acts as a receptor for Human Herpes virus 7/HHV-7. In Homo sapiens (Human), this protein is T-cell surface glycoprotein CD4 (CD4).